We begin with the raw amino-acid sequence, 94 residues long: Aspartyl/glutamyl-tRNA(Asn/Gln) amidotransferase subunit C (94 aa).

The protein belongs to the GatC family. As to quaternary structure, heterotrimer of A, B and C subunits.

It carries out the reaction L-glutamyl-tRNA(Gln) + L-glutamine + ATP + H2O = L-glutaminyl-tRNA(Gln) + L-glutamate + ADP + phosphate + H(+). It catalyses the reaction L-aspartyl-tRNA(Asn) + L-glutamine + ATP + H2O = L-asparaginyl-tRNA(Asn) + L-glutamate + ADP + phosphate + 2 H(+). Functionally, allows the formation of correctly charged Asn-tRNA(Asn) or Gln-tRNA(Gln) through the transamidation of misacylated Asp-tRNA(Asn) or Glu-tRNA(Gln) in organisms which lack either or both of asparaginyl-tRNA or glutaminyl-tRNA synthetases. The reaction takes place in the presence of glutamine and ATP through an activated phospho-Asp-tRNA(Asn) or phospho-Glu-tRNA(Gln). This chain is Aspartyl/glutamyl-tRNA(Asn/Gln) amidotransferase subunit C, found in Opitutus terrae (strain DSM 11246 / JCM 15787 / PB90-1).